The sequence spans 336 residues: D-alanine--D-alanine ligase (336 aa).

In terms of domain architecture, ATP-grasp spans 124-330 (KMWFSALGIP…FATFLEQAIL (207 aa)). Residue 154-209 (AFDEWGSVFIKAASQGSSVGCFPAHRREDIPGLVRKAFEYAPFVVVEKTIKARELE) coordinates ATP. The Mg(2+) site is built by Asp284, Glu297, and Asn299.

Belongs to the D-alanine--D-alanine ligase family. It depends on Mg(2+) as a cofactor. Requires Mn(2+) as cofactor.

The protein resides in the cytoplasm. It catalyses the reaction 2 D-alanine + ATP = D-alanyl-D-alanine + ADP + phosphate + H(+). It participates in cell wall biogenesis; peptidoglycan biosynthesis. Functionally, cell wall formation. In Shewanella amazonensis (strain ATCC BAA-1098 / SB2B), this protein is D-alanine--D-alanine ligase.